We begin with the raw amino-acid sequence, 277 residues long: Phosphatidylglycerol--prolipoprotein diacylglyceryl transferase (277 aa).

The next 4 helical transmembrane spans lie at Ile18 to Ala38, Ile51 to Tyr71, Ile89 to Ile109, and Ile116 to Gly136. Arg137 serves as a coordination point for a 1,2-diacyl-sn-glycero-3-phospho-(1'-sn-glycerol). A run of 3 helical transmembrane segments spans residues Gln177–Ile197, Gly205–Met225, and Phe235–Tyr255.

The protein belongs to the Lgt family.

The protein resides in the cell membrane. The enzyme catalyses L-cysteinyl-[prolipoprotein] + a 1,2-diacyl-sn-glycero-3-phospho-(1'-sn-glycerol) = an S-1,2-diacyl-sn-glyceryl-L-cysteinyl-[prolipoprotein] + sn-glycerol 1-phosphate + H(+). It participates in protein modification; lipoprotein biosynthesis (diacylglyceryl transfer). Functionally, catalyzes the transfer of the diacylglyceryl group from phosphatidylglycerol to the sulfhydryl group of the N-terminal cysteine of a prolipoprotein, the first step in the formation of mature lipoproteins. This Listeria monocytogenes serotype 4a (strain HCC23) protein is Phosphatidylglycerol--prolipoprotein diacylglyceryl transferase.